The chain runs to 199 residues: MLVSGCSISTNGFIMTEPDPISPSATNFIVSLVIMILIESLNWDKSRTILENSEDGNDRVESYCNSSIFKKSASISINFREYSAIRSFLVSSNNKMMESGVLSAISVNVSVLLPQRRILLSEVRSIPNVTGWSHLYSWKASTPISKETNRTLESSTACAMIPSSLHWKLTNWTQSLKPSIILLKRDASSNFASNIFSLF.

The chain crosses the membrane as a helical span at residues 21–38; that stretch reads ISPSATNFIVSLVIMILI.

It localises to the membrane. This is an uncharacterized protein from Saccharomyces cerevisiae (strain ATCC 204508 / S288c) (Baker's yeast).